A 217-amino-acid chain; its full sequence is Putative peroxiredoxin Q, chloroplastic (217 aa).

The transit peptide at Met-1–Val-66 directs the protein to the chloroplast. Residues Val-70–Leu-217 form the Thioredoxin domain. The active-site Cysteine sulfenic acid (-SOH) intermediate is Cys-112. A disulfide bridge links Cys-112 with Cys-117.

Belongs to the peroxiredoxin family. BCP/PrxQ subfamily. In terms of assembly, monomer.

The protein resides in the plastid. It is found in the chloroplast thylakoid lumen. The enzyme catalyses a hydroperoxide + [thioredoxin]-dithiol = an alcohol + [thioredoxin]-disulfide + H2O. In terms of biological role, thiol-specific peroxidase that catalyzes the reduction of hydrogen peroxide and organic hydroperoxides to water and alcohols, respectively. Plays a role in cell protection against oxidative stress by detoxifying peroxides. This Oryza sativa subsp. indica (Rice) protein is Putative peroxiredoxin Q, chloroplastic.